A 584-amino-acid polypeptide reads, in one-letter code: DNA mismatch repair protein MutL (584 aa).

It belongs to the DNA mismatch repair MutL/HexB family.

This protein is involved in the repair of mismatches in DNA. It is required for dam-dependent methyl-directed DNA mismatch repair. May act as a 'molecular matchmaker', a protein that promotes the formation of a stable complex between two or more DNA-binding proteins in an ATP-dependent manner without itself being part of a final effector complex. The chain is DNA mismatch repair protein MutL from Buchnera aphidicola subsp. Acyrthosiphon pisum (strain 5A).